A 429-amino-acid polypeptide reads, in one-letter code: MLLAGAIFILTIVLVIWQPKGLGIGWSATLGAVLALASGVIHIADIPVVWNIVWNATATFIAVIIISLLLDESGFFEWAALHVSRWGNGRGRLLFTYIVLLGAAVAALFANDGAALILTPIVIAMLLALGFSKSTTLAFVMAAGFISDTASLPLIVSNLVNIVSADFFKLGFTEYASVMVPVDIAAIIATLVMLHLFFRKDIPPTYELARLKEPAKAIKDPATFRTGWVVLLLLLVGFFVLEPMGIPVSAIAAVGAAVLFAVAKKGHGINTGKVLRGAPWQIVIFSLGMYLVIYGLRNAGLTDYLSDVLNELADKGLWAATLGTGFLTALLSSIMNNMPTVLIGALSIDGSTATGVIKEAMIYANVIGCDLGPKITPIGSLATLLWLHVLSQKNMTITWGYYFRTGIVMTLPVLFVTLAALALRLSVTL.

The next 10 helical transmembrane spans lie at 24 to 44, 46 to 66, 98 to 118, 121 to 141, 178 to 198, 228 to 248, 249 to 269, 274 to 294, 316 to 335, and 407 to 427; these read IGWSATLGAVLALASGVIHIA, IPVVWNIVWNATATFIAVIII, IVLLGAAVAALFANDGAALIL, IVIAMLLALGFSKSTTLAFVM, VMVPVDIAAIIATLVMLHLFF, WVVLLLLLVGFFVLEPMGIPV, SAIAAVGAAVLFAVAKKGHGI, VLRGAPWQIVIFSLGMYLVIY, GLWAATLGTGFLTALLSSIM, and IVMTLPVLFVTLAALALRLSV.

It is found in the cell inner membrane. Involved in arsenical resistance. Thought to form the channel of an arsenite pump. This is Arsenical pump membrane protein (arsB) from Escherichia coli.